Consider the following 334-residue polypeptide: HTH-type transcriptional repressor PurR (334 aa).

Residues 2-56 enclose the HTH lacI-type domain; sequence ATIKDVAKMAGVSTTTVSHVINKTRHVADETKQTVLDAIKALNYSPSAVARSLKV. The segment at residues 4–23 is a DNA-binding region (H-T-H motif); the sequence is IKDVAKMAGVSTTTVSHVIN. The DNA-binding element occupies 48-56; the sequence is SAVARSLKV. Hypoxanthine contacts are provided by Y73, K189, T191, F220, and D274.

In terms of assembly, homodimer.

It functions in the pathway purine metabolism; purine nucleotide biosynthesis [regulation]. Functionally, is the main repressor of the genes involved in the de novo synthesis of purine nucleotides, regulating purB, purC, purEK, purF, purHD, purL, purMN and guaBA expression. PurR is allosterically activated to bind its cognate DNA by binding the purine corepressors, hypoxanthine or guanine, thereby effecting transcription repression. The polypeptide is HTH-type transcriptional repressor PurR (Mannheimia succiniciproducens (strain KCTC 0769BP / MBEL55E)).